Here is a 110-residue protein sequence, read N- to C-terminus: Prothymosin alpha (110 aa).

An N-acetylmethionine modification is found at M1. Positions 1 to 110 are disordered; sequence MSDAAVDTSS…TKKQKTDEDD (110 aa). Residue S2 is modified to N-acetylserine; in Prothymosin alpha, N-terminally processed. Position 2 is a phosphoserine (S2). T8 carries the post-translational modification Phosphothreonine; by CK2. S9 and S10 each carry phosphoserine. Phosphothreonine; by CK2 is present on residues T13 and T14. The segment covering 13–31 has biased composition (basic and acidic residues); sequence TTKDLKEKKEVVEEAENGR. The residue at position 15 (K15) is an N6-acetyllysine; alternate. Residue K15 is modified to N6-succinyllysine; alternate. Over residues 32–41 the composition is skewed to low complexity; it reads EAPANGNANE. Residues 42 to 83 show a composition bias toward acidic residues; it reads ENGEQEADNEVDEEEEEGGEEEEEEEEGDGEEEDGDEDEEAE. Residues 100-110 show a composition bias toward basic and acidic residues; the sequence is DTKKQKTDEDD. A Phosphothreonine modification is found at T101. The residue at position 102 (K102) is an N6-acetyllysine; alternate. K102 is covalently cross-linked (Glycyl lysine isopeptide (Lys-Gly) (interchain with G-Cter in SUMO2); alternate). At T106 the chain carries Phosphothreonine.

This sequence belongs to the pro/parathymosin family. Interacts with NUPR1; regulates apoptotic process. Covalently linked to a small RNA of about 20 nucleotides.

The protein resides in the nucleus. In terms of biological role, prothymosin alpha may mediate immune function by conferring resistance to certain opportunistic infections. The polypeptide is Prothymosin alpha (PTMA) (Bos taurus (Bovine)).